Here is a 580-residue protein sequence, read N- to C-terminus: Amino-acid acetyltransferase, mitochondrial (580 aa).

Positions 403-560 (LTMQNLFDDK…KLRHQNGVVD (158 aa)) constitute an N-acetyltransferase domain.

It belongs to the acetyltransferase family.

Its subcellular location is the mitochondrion. The catalysed reaction is L-glutamate + acetyl-CoA = N-acetyl-L-glutamate + CoA + H(+). It participates in amino-acid biosynthesis; L-arginine biosynthesis; N(2)-acetyl-L-ornithine from L-glutamate: step 1/4. N-acetylglutamate synthase involved in arginine biosynthesis. This Candida albicans (strain SC5314 / ATCC MYA-2876) (Yeast) protein is Amino-acid acetyltransferase, mitochondrial (ARG2).